Consider the following 172-residue polypeptide: Acetolactate synthase small subunit (172 aa).

Positions 4 to 78 (TLSVLVEDEA…NVIKVQDITE (75 aa)) constitute an ACT domain.

This sequence belongs to the acetolactate synthase small subunit family. In terms of assembly, dimer of large and small chains.

The enzyme catalyses 2 pyruvate + H(+) = (2S)-2-acetolactate + CO2. The protein operates within amino-acid biosynthesis; L-isoleucine biosynthesis; L-isoleucine from 2-oxobutanoate: step 1/4. It participates in amino-acid biosynthesis; L-valine biosynthesis; L-valine from pyruvate: step 1/4. This chain is Acetolactate synthase small subunit (ilvH), found in Synechocystis sp. (strain ATCC 27184 / PCC 6803 / Kazusa).